The sequence spans 141 residues: Galactose-6-phosphate isomerase subunit LacA (141 aa).

It belongs to the LacAB/RpiB family. In terms of assembly, heteromultimeric protein consisting of LacA and LacB.

It carries out the reaction aldehydo-D-galactose 6-phosphate = keto-D-tagatose 6-phosphate. It participates in carbohydrate metabolism; D-galactose 6-phosphate degradation; D-tagatose 6-phosphate from D-galactose 6-phosphate: step 1/1. The sequence is that of Galactose-6-phosphate isomerase subunit LacA from Streptococcus pneumoniae (strain 70585).